A 138-amino-acid chain; its full sequence is Phospholipase A2 homolog mojave toxin acidic chain (138 aa).

Positions 1 to 40 (MRALWIVAVLLVGVEGSLVEFETLIMKIAGRSGISYYSSY) are cleaved as a signal peptide. 7 disulfide bridges follow: Cys-42/Cys-131, Cys-44/Cys-60, Cys-59/Cys-111, Cys-65/Cys-138, Cys-66/Cys-104, Cys-73/Cys-97, and Cys-91/Cys-102. Positions 81–83 (TYR) are excised as a propeptide. A Pyrrolidone carboxylic acid modification is found at Gln-84. Positions 120–126 (DYKYLRF) are excised as a propeptide.

Belongs to the phospholipase A2 family. Group II subfamily. D49 sub-subfamily. In terms of assembly, heterodimer of an acidic and a basic chain. The acidic subunit is non-toxic, without enzymatic activity and comprises 3 peptides that are cross-linked by 5 disulfide bridges. The basic subunit is toxic, has phospholipase A2 activity and is composed of a single chain. The cofactor is Ca(2+). In terms of tissue distribution, expressed by the venom gland.

Its subcellular location is the secreted. Snake venom phospholipase A2 (PLA2) that inhibits neuromuscular transmission by blocking acetylcholine release from the nerve termini. The sequence is that of Phospholipase A2 homolog mojave toxin acidic chain from Crotalus scutulatus scutulatus (Mojave rattlesnake).